The chain runs to 311 residues: Ribosomal RNA small subunit methyltransferase H (311 aa).

S-adenosyl-L-methionine contacts are provided by residues 33 to 35 (GGH), aspartate 51, phenylalanine 78, aspartate 99, and glutamine 106. The interval 289–311 (EEIEKNRRAHSAKLRAAEKLSFA) is disordered.

It belongs to the methyltransferase superfamily. RsmH family.

Its subcellular location is the cytoplasm. The enzyme catalyses cytidine(1402) in 16S rRNA + S-adenosyl-L-methionine = N(4)-methylcytidine(1402) in 16S rRNA + S-adenosyl-L-homocysteine + H(+). Its function is as follows. Specifically methylates the N4 position of cytidine in position 1402 (C1402) of 16S rRNA. This chain is Ribosomal RNA small subunit methyltransferase H, found in Carboxydothermus hydrogenoformans (strain ATCC BAA-161 / DSM 6008 / Z-2901).